A 99-amino-acid polypeptide reads, in one-letter code: DNA-directed RNA polymerase subunit omega (99 aa).

Belongs to the RNA polymerase subunit omega family. As to quaternary structure, the RNAP catalytic core consists of 2 alpha, 1 beta, 1 beta' and 1 omega subunit. When a sigma factor is associated with the core the holoenzyme is formed, which can initiate transcription.

It catalyses the reaction RNA(n) + a ribonucleoside 5'-triphosphate = RNA(n+1) + diphosphate. In terms of biological role, promotes RNA polymerase assembly. Latches the N- and C-terminal regions of the beta' subunit thereby facilitating its interaction with the beta and alpha subunits. The chain is DNA-directed RNA polymerase subunit omega from Thermus thermophilus (strain ATCC BAA-163 / DSM 7039 / HB27).